Consider the following 260-residue polypeptide: UPF0294 protein YPO1077/y3099/YP_2772 (260 aa).

This sequence belongs to the UPF0294 family.

The protein localises to the cytoplasm. This Yersinia pestis protein is UPF0294 protein YPO1077/y3099/YP_2772.